We begin with the raw amino-acid sequence, 932 residues long: DNA mismatch repair protein MutS (932 aa).

615 to 622 (GPNMAGKS) serves as a coordination point for ATP.

Belongs to the DNA mismatch repair MutS family.

This protein is involved in the repair of mismatches in DNA. It is possible that it carries out the mismatch recognition step. This protein has a weak ATPase activity. This is DNA mismatch repair protein MutS from Clostridium botulinum (strain Okra / Type B1).